A 577-amino-acid polypeptide reads, in one-letter code: DNA primase (577 aa).

A CHC2-type zinc finger spans residues 40-64 (CPFHHDKTPSFTVSNEKQFYYCFGC). The Toprim domain occupies 255–337 (VYLLVVEGYI…KKTLKFILLP (83 aa)). Mg(2+) contacts are provided by E261, D305, and D307.

It belongs to the DnaG primase family. Monomer. Interacts with DnaB. Zn(2+) is required as a cofactor. Requires Mg(2+) as cofactor.

It catalyses the reaction ssDNA + n NTP = ssDNA/pppN(pN)n-1 hybrid + (n-1) diphosphate.. Its function is as follows. RNA polymerase that catalyzes the synthesis of short RNA molecules used as primers for DNA polymerase during DNA replication. The chain is DNA primase from Buchnera aphidicola subsp. Acyrthosiphon pisum (strain APS) (Acyrthosiphon pisum symbiotic bacterium).